The sequence spans 552 residues: Glutamate--tRNA ligase (552 aa).

Positions 102–112 match the 'HIGH' region motif; that stretch reads PNPSGPLHIGH.

Belongs to the class-I aminoacyl-tRNA synthetase family. Glutamate--tRNA ligase type 2 subfamily.

It is found in the cytoplasm. The enzyme catalyses tRNA(Glu) + L-glutamate + ATP = L-glutamyl-tRNA(Glu) + AMP + diphosphate. Its function is as follows. Catalyzes the attachment of glutamate to tRNA(Glu) in a two-step reaction: glutamate is first activated by ATP to form Glu-AMP and then transferred to the acceptor end of tRNA(Glu). In Methanothermobacter marburgensis (strain ATCC BAA-927 / DSM 2133 / JCM 14651 / NBRC 100331 / OCM 82 / Marburg) (Methanobacterium thermoautotrophicum), this protein is Glutamate--tRNA ligase.